The chain runs to 353 residues: Mitochondrial ubiquitin ligase activator of nfkb 1 (353 aa).

Residues 1–8 (MENGGRPS) lie on the Cytoplasmic side of the membrane. The helical transmembrane segment at 9-29 (VGQVILLTTSSAITALFYSIY) threads the bilayer. The Mitochondrial intermembrane portion of the chain corresponds to 30–239 (RHKYRSVQTL…LLEKQEVQMR (210 aa)). Residues 240 to 260 (WWRILSIVFGVASCITLFFIL) form a helical membrane-spanning segment. Topologically, residues 261 to 353 (RRKYRHYKEK…IDRIVPLYNS (93 aa)) are cytoplasmic. The RING-type zinc-finger motif lies at 303–341 (CSICLSTEKSCVFLECGHVCSCISCYQALPSPKKCPICR).

In terms of assembly, homooligomer.

It is found in the mitochondrion outer membrane. It carries out the reaction S-ubiquitinyl-[E2 ubiquitin-conjugating enzyme]-L-cysteine + [acceptor protein]-L-lysine = [E2 ubiquitin-conjugating enzyme]-L-cysteine + N(6)-ubiquitinyl-[acceptor protein]-L-lysine.. It participates in protein modification; protein ubiquitination. In terms of biological role, E3 ubiquitin-protein ligase that plays a role in the control of mitochondrial morphology. Promotes mitochondrial fragmentation and influences mitochondrial localization. Inhibits cell growth. E3 ubiquitin ligases accept ubiquitin from an E2 ubiquitin-conjugating enzyme in the form of a thioester and then directly transfer the ubiquitin to targeted substrates. The polypeptide is Mitochondrial ubiquitin ligase activator of nfkb 1 (mul1) (Xenopus laevis (African clawed frog)).